Here is a 469-residue protein sequence, read N- to C-terminus: Serine carboxypeptidase-like 41 (469 aa).

A signal peptide spans 1–20 (MAIVSLRDVAMVMVTVQVFA). Cystine bridges form between cysteine 83–cysteine 342, cysteine 243–cysteine 260, and cysteine 285–cysteine 310. Asparagine 134 carries an N-linked (GlcNAc...) asparagine glycan. Residue serine 175 is part of the active site. Residue asparagine 255 is glycosylated (N-linked (GlcNAc...) asparagine). 2 N-linked (GlcNAc...) asparagine glycosylation sites follow: asparagine 331 and asparagine 347. Catalysis depends on residues aspartate 379 and histidine 436. N-linked (GlcNAc...) asparagine glycosylation occurs at asparagine 461.

It belongs to the peptidase S10 family. In terms of tissue distribution, expressed in flowers.

It localises to the secreted. Its function is as follows. Probable carboxypeptidase. The polypeptide is Serine carboxypeptidase-like 41 (SCPL41) (Arabidopsis thaliana (Mouse-ear cress)).